The primary structure comprises 37 residues: MKVRASVKKMCRNCKIIRRNGAIRVICTEPRHKQRQG.

The protein belongs to the bacterial ribosomal protein bL36 family.

This chain is Large ribosomal subunit protein bL36, found in Chromohalobacter salexigens (strain ATCC BAA-138 / DSM 3043 / CIP 106854 / NCIMB 13768 / 1H11).